The chain runs to 115 residues: Cell division topological specificity factor (115 aa).

Residues 89 to 115 (TGQIQLKEPKNQSEVDSPETEGKDQNS) are disordered.

This sequence belongs to the MinE family.

Its function is as follows. Prevents the cell division inhibition by proteins MinC and MinD at internal division sites while permitting inhibition at polar sites. This ensures cell division at the proper site by restricting the formation of a division septum at the midpoint of the long axis of the cell. The sequence is that of Cell division topological specificity factor from Prochlorococcus marinus (strain NATL2A).